The sequence spans 276 residues: MEIYGIVYSVKDPAGFGMAEYIIKYYGLEKSNVCKNAITCYVGNNFVLAGFSEDVIYFDFLDGRLPDKVSRYIVLSRHSSAKKVCSYTVHHTGNFGPEAPYGGRPRTLSIANPIVSHKLLINLSILAEEYGRIDEYEVSYEATHHGPTDVRKPLNFIEIGSTIDEWKDPVNHEIVALAVIKFLENPNHECIPVTGVGGGHYPRKHTKMAFEKNYCYGHIMAKYALQYLSPEILEEMIVKSDPVPQRIIVEKKGTRREHRRIIEQYVLNRGIVLEYI.

It belongs to the DtdA deacylase family. As to quaternary structure, monomer. Zn(2+) is required as a cofactor.

The enzyme catalyses a D-aminoacyl-tRNA + H2O = a tRNA + a D-alpha-amino acid + H(+). The catalysed reaction is glycyl-tRNA(Ala) + H2O = tRNA(Ala) + glycine + H(+). D-aminoacyl-tRNA deacylase with broad substrate specificity. By recycling D-aminoacyl-tRNA to D-amino acids and free tRNA molecules, this enzyme counteracts the toxicity associated with the formation of D-aminoacyl-tRNA entities in vivo. The chain is D-aminoacyl-tRNA deacylase from Staphylothermus marinus (strain ATCC 43588 / DSM 3639 / JCM 9404 / F1).